The sequence spans 1416 residues: K homology domain-containing protein 4 (1416 aa).

Disordered stretches follow at residues 25–76, 108–174, 196–225, 255–320, and 341–385; these read NPNG…TSMR, KAEA…TRSS, VNSS…LSQS, QNDE…FPGR, and SSLN…MPKP. 3 stretches are compositionally biased toward low complexity: residues 196–213, 273–285, and 341–350; these read VNSS…SANH, QSSF…LDQL, and SSLNPPASGS. The segment covering 357–369 has biased composition (polar residues); that stretch reads GLSSAQPLRSPQP. KH domains follow at residues 412 to 504, 508 to 594, 747 to 816, 817 to 892, and 900 to 968; these read FKST…VILD, GLRS…QVSM, FEVR…EELP, AEMS…SVME, and DYIS…DHVP. 2 disordered regions span residues 1215–1240 and 1289–1416; these read AGVS…SGHR and HASG…FDRA. The span at 1219–1239 shows a compositional bias: polar residues; that stretch reads VPTSGGIQFPSQPSLHQQSGH. The segment covering 1343 to 1374 has biased composition (low complexity); that stretch reads QQQAQQQLQYQQQQQQQQQQQQQPGYGMPHQP. The span at 1391–1402 shows a compositional bias: polar residues; it reads RNTQNPDSTTMD.

Functionally, RNA-binding protein that recognizes the sequence AUACCC via its tandem KH domains 3 and 4, probably in order to promote mRNA instability. Plays an essential role in filamentous growth and virulence. This Mycosarcoma maydis (Corn smut fungus) protein is K homology domain-containing protein 4.